The sequence spans 171 residues: Flavodoxin (171 aa).

The region spanning 4-166 is the Flavodoxin-like domain; sequence IGLFVGTTTG…RIKEWVKQLK (163 aa).

This sequence belongs to the flavodoxin family. It depends on FMN as a cofactor.

Its function is as follows. Low-potential electron donor to a number of redox enzymes. The chain is Flavodoxin (fld) from Trichodesmium erythraeum (strain IMS101).